The chain runs to 203 residues: Small ribosomal subunit protein uS2 (203 aa).

It belongs to the universal ribosomal protein uS2 family.

In Methanopyrus kandleri (strain AV19 / DSM 6324 / JCM 9639 / NBRC 100938), this protein is Small ribosomal subunit protein uS2.